Consider the following 301-residue polypeptide: Putative hydro-lyase C5H10.01 (301 aa).

The protein belongs to the D-glutamate cyclase family.

This Schizosaccharomyces pombe (strain 972 / ATCC 24843) (Fission yeast) protein is Putative hydro-lyase C5H10.01.